A 191-amino-acid chain; its full sequence is Glutathione-dependent formaldehyde-activating enzyme (191 aa).

Positions 22–169 (FAGGTLQCLC…LTELGLTPYD (148 aa)) constitute a CENP-V/GFA domain. Positions 29, 31, 50, 52, 55, 97, and 100 each coordinate Zn(2+).

The protein belongs to the Gfa family. It depends on Zn(2+) as a cofactor.

It carries out the reaction S-(hydroxymethyl)glutathione = glutathione + formaldehyde. It functions in the pathway one-carbon metabolism; formaldehyde degradation; formate from formaldehyde (glutathione route): step 1/3. Its function is as follows. Catalyzes the condensation of formaldehyde and glutathione to S-hydroxymethylglutathione. The polypeptide is Glutathione-dependent formaldehyde-activating enzyme (Xanthomonas campestris pv. campestris (strain B100)).